A 190-amino-acid chain; its full sequence is Putative phosphatidylethanolamine-binding protein (190 aa).

The protein belongs to the phosphatidylethanolamine-binding protein family.

This is Putative phosphatidylethanolamine-binding protein from Plasmodium falciparum.